Here is a 711-residue protein sequence, read N- to C-terminus: Dendrin (711 aa).

Disordered regions lie at residues Met-1 to Ser-22, Ala-49 to Leu-273, Asp-324 to Leu-446, and Pro-479 to Ser-677. The span at Pro-75–Arg-84 shows a compositional bias: pro residues. A coiled-coil region spans residues Leu-102–Gly-134. Basic and acidic residues predominate over residues Val-105–Arg-127. Positions Arg-113–Lys-131 are nuclear localization. Positions Ala-150 to Ala-161 are enriched in low complexity. The interval Gly-186–Pro-236 is interaction with MAGI2. Low complexity-rich tracts occupy residues Pro-252 to Ala-262 and Ala-346 to Cys-356. Positions Ala-341–Ala-436 are interaction with ACTN1. Ser-389 bears the Phosphoserine mark. Residues Gly-408–Lys-709 form an interaction with CD2AP and NPHS1 region. Basic and acidic residues predominate over residues Gly-529 to Phe-546.

As to quaternary structure, forms a ternary complex with MAGI2 and SH3KBP1; recruits DDN to the cytoplasm. Interacts with MAGI1. Interacts with ACTN1 and may interact with WWC1. Interacts with the podocyte slit diaphragm proteins CD2AP, NPHS1 and NPHS2; the interaction with CD2AP and NPHS1 is direct. As to expression, specifically expressed in brain and kidney. Expressed in kidney glomerular capillary loops (at protein level).

It localises to the cell projection. The protein resides in the dendritic spine membrane. The protein localises to the cytoplasm. It is found in the endoplasmic reticulum membrane. Its subcellular location is the perikaryon. It localises to the nucleus. Promotes apoptosis of kidney glomerular podocytes. Podocytes are highly specialized cells essential to the ultrafiltration of blood, resulting in the extraction of urine and the retention of protein. The sequence is that of Dendrin (DDN) from Homo sapiens (Human).